Consider the following 253-residue polypeptide: HTH-type transcriptional regulator AdiY (253 aa).

In terms of domain architecture, HTH araC/xylS-type spans 149–246 (DSVYQIIESD…GMTPLHYVSQ (98 aa)). 2 DNA-binding regions (H-T-H motif) span residues 166-187 (SMVA…KSEN) and 213-236 (ISQV…KDFY).

This is HTH-type transcriptional regulator AdiY (adiY) from Escherichia coli (strain K12).